A 265-amino-acid polypeptide reads, in one-letter code: Phosphate import ATP-binding protein PstB (265 aa).

One can recognise an ABC transporter domain in the interval I18 to I260. G50–S57 contributes to the ATP binding site.

It belongs to the ABC transporter superfamily. Phosphate importer (TC 3.A.1.7) family. In terms of assembly, the complex is composed of two ATP-binding proteins (PstB), two transmembrane proteins (PstC and PstA) and a solute-binding protein (PstS).

Its subcellular location is the cell inner membrane. The catalysed reaction is phosphate(out) + ATP + H2O = ADP + 2 phosphate(in) + H(+). Part of the ABC transporter complex PstSACB involved in phosphate import. Responsible for energy coupling to the transport system. In Roseobacter denitrificans (strain ATCC 33942 / OCh 114) (Erythrobacter sp. (strain OCh 114)), this protein is Phosphate import ATP-binding protein PstB.